Reading from the N-terminus, the 99-residue chain is Acylphosphatase (99 aa).

One can recognise an Acylphosphatase-like domain in the interval 5–97; the sequence is ILQVMIRGRV…RAGEKFSVLP (93 aa). Catalysis depends on residues R20 and N38.

It belongs to the acylphosphatase family.

The catalysed reaction is an acyl phosphate + H2O = a carboxylate + phosphate + H(+). The chain is Acylphosphatase (acyP) from Bradyrhizobium diazoefficiens (strain JCM 10833 / BCRC 13528 / IAM 13628 / NBRC 14792 / USDA 110).